A 304-amino-acid chain; its full sequence is Non-specific ribonucleoside hydrolase RihC (304 aa).

The active site involves H233.

This sequence belongs to the IUNH family. RihC subfamily.

Hydrolyzes both purine and pyrimidine ribonucleosides with a broad-substrate specificity. The polypeptide is Non-specific ribonucleoside hydrolase RihC (Escherichia coli O8 (strain IAI1)).